Consider the following 642-residue polypeptide: 1,4-alpha-glucan branching enzyme GlgB (642 aa).

Aspartate 304 acts as the Nucleophile in catalysis. Glutamate 355 functions as the Proton donor in the catalytic mechanism.

Belongs to the glycosyl hydrolase 13 family. GlgB subfamily. Monomer.

The enzyme catalyses Transfers a segment of a (1-&gt;4)-alpha-D-glucan chain to a primary hydroxy group in a similar glucan chain.. Its pathway is glycan biosynthesis; glycogen biosynthesis. Its function is as follows. Catalyzes the formation of the alpha-1,6-glucosidic linkages in glycogen by scission of a 1,4-alpha-linked oligosaccharide from growing alpha-1,4-glucan chains and the subsequent attachment of the oligosaccharide to the alpha-1,6 position. This chain is 1,4-alpha-glucan branching enzyme GlgB, found in Streptococcus pneumoniae serotype 2 (strain D39 / NCTC 7466).